An 81-amino-acid polypeptide reads, in one-letter code: Sulfur carrier protein TusA (81 aa).

Catalysis depends on Cys19, which acts as the Cysteine persulfide intermediate.

Belongs to the sulfur carrier protein TusA family.

It is found in the cytoplasm. In terms of biological role, sulfur carrier protein which probably makes part of a sulfur-relay system. In Aeromonas salmonicida (strain A449), this protein is Sulfur carrier protein TusA.